A 299-amino-acid polypeptide reads, in one-letter code: Coenzyme PQQ synthesis protein B (299 aa).

It belongs to the PqqB family.

It participates in cofactor biosynthesis; pyrroloquinoline quinone biosynthesis. Its function is as follows. May be involved in the transport of PQQ or its precursor to the periplasm. This Methylorubrum populi (strain ATCC BAA-705 / NCIMB 13946 / BJ001) (Methylobacterium populi) protein is Coenzyme PQQ synthesis protein B.